The chain runs to 168 residues: ATP synthase F(1) complex subunit delta, mitochondrial (168 aa).

Residues 1–22 (MLPAALLRRPGLGRLVRHARAY) constitute a mitochondrion transit peptide. N6-acetyllysine; alternate occurs at positions 136 and 165. N6-succinyllysine; alternate is present on residues Lys136 and Lys165.

It belongs to the ATPase epsilon chain family. As to quaternary structure, component of the ATP synthase complex composed at least of ATP5F1A/subunit alpha, ATP5F1B/subunit beta, ATP5MC1/subunit c (homooctomer), MT-ATP6/subunit a, MT-ATP8/subunit 8, ATP5ME/subunit e, ATP5MF/subunit f, ATP5MG/subunit g, ATP5MK/subunit k, ATP5MJ/subunit j, ATP5F1C/subunit gamma, ATP5F1D/subunit delta, ATP5F1E/subunit epsilon, ATP5PF/subunit F6, ATP5PB/subunit b, ATP5PD/subunit d, ATP5PO/subunit OSCP. ATP synthase complex consists of a soluble F(1) head domain (subunits alpha(3) and beta(3)) - the catalytic core - and a membrane F(0) domain - the membrane proton channel (subunits c, a, 8, e, f, g, k and j). These two domains are linked by a central stalk (subunits gamma, delta, and epsilon) rotating inside the F1 region and a stationary peripheral stalk (subunits F6, b, d, and OSCP). Component of a complex composed at least by ATPIF1, ATP5F1A, ATP5F1B, ATP5F1C AND ATP5F1E.

Its subcellular location is the mitochondrion. It is found in the mitochondrion inner membrane. Its function is as follows. Subunit delta, of the mitochondrial membrane ATP synthase complex (F(1)F(0) ATP synthase or Complex V) that produces ATP from ADP in the presence of a proton gradient across the membrane which is generated by electron transport complexes of the respiratory chain. ATP synthase complex consist of a soluble F(1) head domain - the catalytic core - and a membrane F(1) domain - the membrane proton channel. These two domains are linked by a central stalk rotating inside the F(1) region and a stationary peripheral stalk. During catalysis, ATP synthesis in the catalytic domain of F(1) is coupled via a rotary mechanism of the central stalk subunits to proton translocation. In vivo, can only synthesize ATP although its ATP hydrolase activity can be activated artificially in vitro. With the central stalk subunit gamma, is essential for the biogenesis of F(1) catalytic part of the ATP synthase complex namely in the formation of F1 assembly intermediate. This Homo sapiens (Human) protein is ATP synthase F(1) complex subunit delta, mitochondrial.